The sequence spans 36 residues: MSDINATRLPIWGIGCDPCIGDDVTALLTRGEASLC.

The propeptide occupies 1–10 (MSDINATRLP). Residues 11–18 (IWGIGCDP) constitute a cross-link (cyclopeptide (Ile-Pro)). The 2'-cysteinyl-6'-hydroxytryptophan sulfoxide (Trp-Cys) cross-link spans 12–16 (WGIGC). Residues 19 to 36 (CIGDDVTALLTRGEASLC) constitute a propeptide that is removed on maturation.

It belongs to the MSDIN fungal toxin family. In terms of processing, processed by the macrocyclase-peptidase enzyme POPB to yield a toxic cyclic decapeptide. POPB first removes 10 residues from the N-terminus. Conformational trapping of the remaining peptide forces the enzyme to release this intermediate rather than proceed to macrocyclization. The enzyme rebinds the remaining peptide in a different conformation and catalyzes macrocyclization of the N-terminal 8 residues.

Functionally, toxin belonging to the bicyclic octapeptides amatoxins that acts by binding non-competitively to RNA polymerase II and greatly slowing the elongation of transcripts from target promoters. The polypeptide is Beta-amanitin proprotein (Amanita phalloides (Death cap)).